The sequence spans 392 residues: uncharacterized protein (392 aa).

The N-terminal 34 residues, 1-34 (MCISSSSLLCGINSLKYASNRVGILIPPFQTASS), are a transit peptide targeting the mitochondrion. Helical transmembrane passes span 115–135 (VAIM…WHWD), 150–172 (FRFM…WWTL), 185–205 (LLVN…KFGV), 208–225 (ALSV…VALQ), 277–297 (ATFV…AVYA), 299–319 (AAIF…VYPV), 321–341 (AGIF…LNYE), and 350–370 (AHVS…PAMW). Ser292 functions as the Nucleophile in the catalytic mechanism. Residue His351 is part of the active site.

This sequence belongs to the peptidase S54 family.

Its subcellular location is the mitochondrion inner membrane. This is an uncharacterized protein from Schizosaccharomyces pombe (strain 972 / ATCC 24843) (Fission yeast).